Consider the following 67-residue polypeptide: Conotoxin TsMMSK-B021 (67 aa).

The first 20 residues, 1-20, serve as a signal peptide directing secretion; sequence MMSKLGVLLTICLLLFPLTA. Positions 21 to 50 are excised as a propeptide; it reads VQLDGDQPADLPELRAQDFAPERSPWFDPV. Cystine bridges form between Cys-53–Cys-65, Cys-54–Cys-61, and Cys-58–Cys-64. Pro-63 carries the 4-hydroxyproline modification.

Belongs to the conotoxin M superfamily. As to expression, expressed by the venom duct.

The protein localises to the secreted. This chain is Conotoxin TsMMSK-B021, found in Conus tessulatus (Tessellate cone).